The sequence spans 205 residues: Ras-related protein Rab-1A (205 aa).

N-acetylserine is present on serine 2. GTP-binding residues include serine 20, glycine 21, glycine 23, lysine 24, serine 25, cysteine 26, glutamate 38, and threonine 43. Serine 25 lines the Mg(2+) pocket. The Switch 1 signature appears at 34–48; the sequence is DTYTESYISTIGVDF. Residue threonine 43 participates in Mg(2+) binding. Glycyl lysine isopeptide (Lys-Gly) (interchain with G-Cter in ubiquitin) cross-links involve residues lysine 49 and lysine 61. Aspartate 66 is a Mg(2+) binding site. The Switch 2 signature appears at 66 to 83; the sequence is DTAGQERFRTITSSYYRG. GTP contacts are provided by glycine 69, asparagine 124, lysine 125, aspartate 127, alanine 155, and lysine 156. The disordered stretch occupies residues 178 to 205; the sequence is PGATAGGAEKSNVKIQSTPVKQSGGGCC. Residue serine 194 is modified to Phosphoserine. 2 S-geranylgeranyl cysteine lipidation sites follow: cysteine 204 and cysteine 205.

Belongs to the small GTPase superfamily. Rab family. As to quaternary structure, may interact with YIPF5. Interacts with C9orf72; the interaction mediates recruitment of RAB1A to the ATG1/ULK1 kinase complex. Interacts with GDI1; this promotes dissociation from membranes. Requires Mg(2+) as cofactor. In terms of processing, phosphorylated by CDK1 kinase during mitosis. Post-translationally, ubiquitinated via 'Lys-11'-linked ubiquitination on Lys-49 and Lys-61; impairing the recruitment of guanosine diphosphate (GDP) dissociation inhibitor 1/GDI1.

Its subcellular location is the golgi apparatus. It is found in the endoplasmic reticulum. The protein localises to the early endosome. The protein resides in the cytoplasm. It localises to the cytosol. Its subcellular location is the membrane. It is found in the melanosome. The enzyme catalyses GTP + H2O = GDP + phosphate + H(+). Regulated by guanine nucleotide exchange factors (GEFs) which promote the exchange of bound GDP for free GTP. Regulated by GTPase activating proteins (GAPs) which increase the GTP hydrolysis activity. Inhibited by GDP dissociation inhibitors (GDIs). Its function is as follows. The small GTPases Rab are key regulators of intracellular membrane trafficking, from the formation of transport vesicles to their fusion with membranes. Rabs cycle between an inactive GDP-bound form and an active GTP-bound form that is able to recruit to membranes different sets of downstream effectors directly responsible for vesicle formation, movement, tethering and fusion. RAB1A regulates vesicular protein transport from the endoplasmic reticulum (ER) to the Golgi compartment and on to the cell surface, and plays a role in IL-8 and growth hormone secretion. Required to modulate the compacted morphology of the Golgi. Regulates the level of CASR present at the cell membrane. Plays a role in cell adhesion and cell migration, via its role in protein trafficking. Plays a role in autophagosome assembly and cellular defense reactions against pathogenic bacteria. Plays a role in microtubule-dependent protein transport by early endosomes and in anterograde melanosome transport. The polypeptide is Ras-related protein Rab-1A (RAB1A) (Canis lupus familiaris (Dog)).